A 614-amino-acid chain; its full sequence is Fimbrin (614 aa).

2 consecutive EF-hand domains span residues 16 to 50 (EEILTLTDQFNKLDVDGKGYLDQPTTIKAFEDSKK) and 51 to 86 (GSYDEVREAIREVNVDSSGRVEPEDFVGIFNVLKKG). Residues Asp29, Asp31, Tyr35, Thr40, Asp66, Ser68, Arg70, and Asp75 each coordinate Ca(2+). Actin-binding stretches follow at residues 98–368 (TIKG…GLEP) and 369–614 (LNEE…LMAV). 4 Calponin-homology (CH) domains span residues 112–233 (EEER…RRGL), 261–364 (LPPE…NTHP), 385–495 (EREA…RMNI), and 508–614 (TLSD…LMAV).

The protein resides in the cytoplasm. Its subcellular location is the cytoskeleton. The protein localises to the actin patch. Binds to actin, and functionally associates with actin structures involved in the development and maintenance of cell polarity. Plays a role in cytokinesis. Plays important roles in mating and in spore formation. This chain is Fimbrin (fim1), found in Schizosaccharomyces pombe (strain 972 / ATCC 24843) (Fission yeast).